We begin with the raw amino-acid sequence, 265 residues long: Acetylglutamate kinase (265 aa).

Substrate-binding positions include 41-42 (GG), arginine 63, and asparagine 156.

Belongs to the acetylglutamate kinase family. ArgB subfamily.

The protein resides in the cytoplasm. It catalyses the reaction N-acetyl-L-glutamate + ATP = N-acetyl-L-glutamyl 5-phosphate + ADP. Its pathway is amino-acid biosynthesis; L-arginine biosynthesis; N(2)-acetyl-L-ornithine from L-glutamate: step 2/4. Functionally, catalyzes the ATP-dependent phosphorylation of N-acetyl-L-glutamate. In Oceanobacillus iheyensis (strain DSM 14371 / CIP 107618 / JCM 11309 / KCTC 3954 / HTE831), this protein is Acetylglutamate kinase.